The sequence spans 495 residues: Cytochrome P450 94C1 (495 aa).

A helical membrane pass occupies residues 2–22; the sequence is LLIISFTIVSFFFIIIFSLFH. C439 lines the heme pocket.

It belongs to the cytochrome P450 family. Heme is required as a cofactor.

It localises to the membrane. Its subcellular location is the endoplasmic reticulum membrane. It carries out the reaction a 12-hydroxyjasmonyl-L-alpha-amino acid + 2 reduced [NADPH--hemoprotein reductase] + 2 O2 = a 12-hydroxy-12-oxojasmonyl-L-alpha-amino acid + 2 oxidized [NADPH--hemoprotein reductase] + 3 H2O + 3 H(+). Its function is as follows. Involved in the oxidation of the plant hormone jasmonoyl-L-isoleucine (JA-Ile), a bioactive phytohormone of the jasmonate-mediated signaling pathway. Converts 12-hydroxy-JA-Ile (12OH-JA-Ile) to the carboxy-derivative 12COOH-JA-Ile. Exerts negative feedback control on JA-Ile levels and plays a role in attenuation of jasmonate responses. Also functions as in-chain fatty acids hydroxylase in vitro. Catalyzes the hydroxylation of 12-hydroxy-jasmonoyl-L-phenylalanine (12OH-JA-Phe) in vitro. Converts 12OH-JA-Phe to the carboxy-derivative 12COOH-JA-Phe. The protein is Cytochrome P450 94C1 of Arabidopsis thaliana (Mouse-ear cress).